The primary structure comprises 308 residues: Growth/differentiation factor 15 (308 aa).

Positions 1–29 are cleaved as a signal peptide; it reads MPGQELRTVNGSQMLLVLLVLSWLPHGGA. A propeptide spanning residues 30–194 is cleaved from the precursor; that stretch reads LSLAEASRAS…RPQAARGRRR (165 aa). Asn-70 carries N-linked (GlcNAc...) asparagine glycosylation. A disordered region spans residues 152–177; sequence APALHLRLSPPPSQSDQLLAESSSAR. Positions 165–177 are enriched in polar residues; that stretch reads QSDQLLAESSSAR. 4 disulfide bridges follow: Cys-203–Cys-210, Cys-211–Cys-274, Cys-240–Cys-305, and Cys-244–Cys-307.

It belongs to the TGF-beta family. In terms of assembly, homodimer; disulfide-linked. Interacts with GFRAL and RET; ligand of GFRAL, which mediates GDF15 internalization and cellular signaling through interaction with RET via the formation of a 2:2:2 ternary complex composed of GDF15, GFRAL and RET. In terms of tissue distribution, detected in plasma (at protein level). Highly expressed in placenta, with lower levels in prostate and colon and some expression in kidney.

It localises to the secreted. Hormone produced in response to various stresses to confer information about those stresses to the brain, and trigger an aversive response, characterized by nausea, vomiting, and/or loss of appetite. The aversive response is both required to reduce continuing exposure to those stresses at the time of exposure and to promote avoidance behavior in the future. Acts by binding to its receptor, GFRAL, activating GFRAL-expressing neurons localized in the area postrema and nucleus tractus solitarius of the brainstem. It then triggers the activation of neurons localized within the parabrachial nucleus and central amygdala, which constitutes part of the 'emergency circuit' that shapes responses to stressful conditions. The GDF15-GFRAL signal induces expression of genes involved in metabolism, such as lipid metabolism in adipose tissues. Required for avoidance behavior in response to food allergens: induced downstream of mast cell activation to promote aversion and minimize harmful effects of exposure to noxious substances. In addition to suppress appetite, also promotes weight loss by enhancing energy expenditure in muscle: acts by increasing calcium futile cycling in muscle. Contributes to the effect of metformin, an anti-diabetic drug, on appetite reduction and weight loss: produced in the kidney in response to metformin treatment, thereby activating the GDF15-GFRAL response, leading to reduced appetite and weight. The contribution of GDF15 to weight loss following metformin treatment is however limited and subject to discussion. Produced in response to anticancer drugs, such as camptothecin or cisplatin, promoting nausea, vomiting and contributing to malnutrition. Overproduced in many cancers, promoting anorexia in cancer (cachexia). Responsible for the risk of nausea and vomiting during pregnancy: high levels of GDF15 during pregnancy, mostly originating from the fetus, are associated with increased nausea and vomiting. Maternal sensitivity to nausea is probably determined by pre-pregnancy exposure to GDF15, women with naturally high level of GDF15 being less susceptible to nausea than women with low levels of GDF15 before pregnancy. Promotes metabolic adaptation in response to systemic inflammation caused by bacterial and viral infections in order to promote tissue tolerance and prevent tissue damage. Required for tissue tolerance in response to myocardial infarction by acting as an inhibitor of leukocyte integring activation, thereby protecting against cardiac rupture. Inhibits growth hormone signaling on hepatocytes. This chain is Growth/differentiation factor 15, found in Homo sapiens (Human).